Reading from the N-terminus, the 690-residue chain is Glycine--tRNA ligase beta subunit (690 aa).

It belongs to the class-II aminoacyl-tRNA synthetase family. In terms of assembly, tetramer of two alpha and two beta subunits.

It localises to the cytoplasm. The catalysed reaction is tRNA(Gly) + glycine + ATP = glycyl-tRNA(Gly) + AMP + diphosphate. The protein is Glycine--tRNA ligase beta subunit of Syntrophus aciditrophicus (strain SB).